Reading from the N-terminus, the 344-residue chain is Glycerol-3-phosphate dehydrogenase [NAD(P)+] (344 aa).

NADPH contacts are provided by Ser-11, Trp-12, His-32, Arg-33, and Lys-105. 3 residues coordinate sn-glycerol 3-phosphate: Lys-105, Gly-135, and Ser-137. Position 139 (Ala-139) interacts with NADPH. Sn-glycerol 3-phosphate contacts are provided by Lys-190, Asp-243, Ser-253, Arg-254, and Asn-255. Lys-190 (proton acceptor) is an active-site residue. Arg-254 is an NADPH binding site. NADPH contacts are provided by Val-278 and Glu-280.

Belongs to the NAD-dependent glycerol-3-phosphate dehydrogenase family.

Its subcellular location is the cytoplasm. It carries out the reaction sn-glycerol 3-phosphate + NAD(+) = dihydroxyacetone phosphate + NADH + H(+). The enzyme catalyses sn-glycerol 3-phosphate + NADP(+) = dihydroxyacetone phosphate + NADPH + H(+). It participates in membrane lipid metabolism; glycerophospholipid metabolism. Functionally, catalyzes the reduction of the glycolytic intermediate dihydroxyacetone phosphate (DHAP) to sn-glycerol 3-phosphate (G3P), the key precursor for phospholipid synthesis. The protein is Glycerol-3-phosphate dehydrogenase [NAD(P)+] of Oceanobacillus iheyensis (strain DSM 14371 / CIP 107618 / JCM 11309 / KCTC 3954 / HTE831).